A 761-amino-acid polypeptide reads, in one-letter code: MLASSKRMNSSSRSQILLRWKSDKAQSGPYNVEKEILTSRFLRDTETCRQNFRNFPYPDLAGPRKALSQLRELCLKWLRPEIHSKEQILELLVLEQFLTILPGEVRTWVKSQYPESSEEAVTLVEDLTQILEEEAPQNSTLSQDTPEEDPRGKHAFQTGWLNDLVTKESMTFKDVAVDITQEDWELMRPVQKELYKTVTLQNYWNMVSLGLTVYRPTVIPILEEPWMVIKEILEGPSPEWETKAQACTPVEDMSKLTKEETQTIKLEDSYDYDDRLERRATGGFWKIHTNERGFSLKSALSQEYDPTEECLSKYDIYRNNFEKHSNLIVQFDTQLDNKTSVYNEGRATFNHVSYGIVHRKILPGEKPYKCNVCGKKFRKYPSLLKHQSTHAKEKSYECEECGKEFRHISSLIAHQRMHTGEKPYECHQCGKAFSQRAHLTIHQRIHTGEKPYKCDDCGKDFSQRAHLTIHQRTHTGEKPYKCLECGKTFSHSSSLINHQRVHTGEKPYICNECGKTFSQSTHLLQHQKIHTGKKPYKCNECWKVFSQSTYLIRHQRIHSGEKCYKCNECGKAFAHSSTLIQHQTTHTGEKSYICNICGKAFSQSANLTQHHRTHTGEKPYKCSVCGKAFSQSVHLTQHQRIHNGEKPFKCNICGKAYRQGANLTQHQRIHTGEKPYKCNECGKAFIYSSSLNQHQRTHTGERPYKCNECDKDFSQRTCLIQHQRIHTGEKPYACRICGKTFTQSTNLIQHQRVHTGAKHRN.

The 83-residue stretch at 49–131 (RQNFRNFPYP…TLVEDLTQIL (83 aa)) folds into the SCAN box domain. The segment at 134–154 (EAPQNSTLSQDTPEEDPRGKH) is disordered. The KRAB domain maps to 170 to 238 (MTFKDVAVDI…IKEILEGPSP (69 aa)). 14 consecutive C2H2-type zinc fingers follow at residues 368–390 (YKCNVCGKKFRKYPSLLKHQSTH), 396–418 (YECEECGKEFRHISSLIAHQRMH), 424–446 (YECHQCGKAFSQRAHLTIHQRIH), 452–474 (YKCDDCGKDFSQRAHLTIHQRTH), 480–502 (YKCLECGKTFSHSSSLINHQRVH), 508–530 (YICNECGKTFSQSTHLLQHQKIH), 536–558 (YKCNECWKVFSQSTYLIRHQRIH), 564–586 (YKCNECGKAFAHSSTLIQHQTTH), 592–614 (YICNICGKAFSQSANLTQHHRTH), 620–642 (YKCSVCGKAFSQSVHLTQHQRIH), 648–670 (FKCNICGKAYRQGANLTQHQRIH), 676–698 (YKCNECGKAFIYSSSLNQHQRTH), 704–726 (YKCNECDKDFSQRTCLIQHQRIH), and 732–754 (YACRICGKTFTQSTNLIQHQRVH).

The protein belongs to the krueppel C2H2-type zinc-finger protein family.

It localises to the nucleus. Its function is as follows. May be involved in transcriptional regulation. The sequence is that of Zinc finger protein 287 from Pongo pygmaeus (Bornean orangutan).